A 122-amino-acid polypeptide reads, in one-letter code: MIQPQTLLNVADNSGARELMCIRILGASNRRYANIGDVIVAVIKEAVPNMPLERSEVIRAVIVRTRKELKRENGMRIRYDDNAAVVIDQEGNPKGTRVFGAIARELRELNFTKIVSLAPEVL.

This sequence belongs to the universal ribosomal protein uL14 family. As to quaternary structure, part of the 50S ribosomal subunit.

The protein resides in the plastid. The protein localises to the chloroplast. Functionally, binds to 23S rRNA. The chain is Large ribosomal subunit protein uL14c from Lemna minor (Common duckweed).